Consider the following 179-residue polypeptide: Ribosome-recycling factor (179 aa).

This sequence belongs to the RRF family.

Its subcellular location is the cytoplasm. Its function is as follows. Responsible for the release of ribosomes from messenger RNA at the termination of protein biosynthesis. May increase the efficiency of translation by recycling ribosomes from one round of translation to another. This chain is Ribosome-recycling factor, found in Chlamydia trachomatis serovar D (strain ATCC VR-885 / DSM 19411 / UW-3/Cx).